The primary structure comprises 173 residues: Crossover junction endodeoxyribonuclease RuvC (173 aa).

Residues D8, E67, and D139 contribute to the active site. Residues D8, E67, and D139 each contribute to the Mg(2+) site.

This sequence belongs to the RuvC family. Homodimer which binds Holliday junction (HJ) DNA. The HJ becomes 2-fold symmetrical on binding to RuvC with unstacked arms; it has a different conformation from HJ DNA in complex with RuvA. In the full resolvosome a probable DNA-RuvA(4)-RuvB(12)-RuvC(2) complex forms which resolves the HJ. The cofactor is Mg(2+).

Its subcellular location is the cytoplasm. It catalyses the reaction Endonucleolytic cleavage at a junction such as a reciprocal single-stranded crossover between two homologous DNA duplexes (Holliday junction).. Its function is as follows. The RuvA-RuvB-RuvC complex processes Holliday junction (HJ) DNA during genetic recombination and DNA repair. Endonuclease that resolves HJ intermediates. Cleaves cruciform DNA by making single-stranded nicks across the HJ at symmetrical positions within the homologous arms, yielding a 5'-phosphate and a 3'-hydroxyl group; requires a central core of homology in the junction. The consensus cleavage sequence is 5'-(A/T)TT(C/G)-3'. Cleavage occurs on the 3'-side of the TT dinucleotide at the point of strand exchange. HJ branch migration catalyzed by RuvA-RuvB allows RuvC to scan DNA until it finds its consensus sequence, where it cleaves and resolves the cruciform DNA. This is Crossover junction endodeoxyribonuclease RuvC from Shigella flexneri serotype 5b (strain 8401).